Consider the following 614-residue polypeptide: Inactive leucine-rich repeat receptor-like serine/threonine-protein kinase At5g24100 (614 aa).

Residues 1–21 form the signal peptide; the sequence is MSRGRSFIFYFVLFLFFGSSA. Topologically, residues 22–251 are extracellular; the sequence is LYSQVTGDLA…KNGIYISEPA (230 aa). N-linked (GlcNAc...) asparagine glycosylation is present at N53. LRR repeat units lie at residues 71–95, 96–120, 121–146, 148–167, 168–190, and 191–214; these read GTRV…TISR, LSEL…FLQL, KKLK…TWTN, TVLD…GFAN, LTGL…DLNL, and PGLR…LKRF. 3 N-linked (GlcNAc...) asparagine glycosylation sites follow: N146, N158, and N167. Residues N197 and N202 are each glycosylated (N-linked (GlcNAc...) asparagine). The chain crosses the membrane as a helical span at residues 252-272; the sequence is ILGIAISVCFVIFFVIAVVII. The Cytoplasmic portion of the chain corresponds to 273 to 614; it reads VCYVKRQRKS…VETLEEIERD (342 aa). In terms of domain architecture, Protein kinase spans 341–611; the sequence is IASAEFLGKG…VKVVETLEEI (271 aa). S343 is modified (phosphoserine). ATP-binding positions include 347–355 and K369; that span reads LGKGVFGMT. S420 is modified (phosphoserine). A phosphothreonine mark is found at T441, T514, and T591. Residues 578–601 form an LRR 7 repeat; it reads AKLLQMLQLGTSCTAMVPAKRPDM.

Belongs to the protein kinase superfamily. Ser/Thr protein kinase family.

It localises to the cell membrane. The polypeptide is Inactive leucine-rich repeat receptor-like serine/threonine-protein kinase At5g24100 (Arabidopsis thaliana (Mouse-ear cress)).